The chain runs to 344 residues: Cell division protein ZipA (344 aa).

Over 1-6 (MEDLQL) the chain is Periplasmic. A helical membrane pass occupies residues 7–27 (VLFVLGAIAIVAVLVHGFWSI). The Cytoplasmic segment spans residues 28-344 (RRQQPKSLKD…DYLHRIRANA (317 aa)). Disordered regions lie at residues 75 to 94 (VRKASESQTPEAPAVNPYLK) and 108 to 139 (QFKQEPSMAQPDFSLQSPSVDEPHRGTKASRQ).

The protein belongs to the ZipA family. As to quaternary structure, interacts with FtsZ via their C-terminal domains.

It is found in the cell inner membrane. Essential cell division protein that stabilizes the FtsZ protofilaments by cross-linking them and that serves as a cytoplasmic membrane anchor for the Z ring. Also required for the recruitment to the septal ring of downstream cell division proteins. This Shewanella oneidensis (strain ATCC 700550 / JCM 31522 / CIP 106686 / LMG 19005 / NCIMB 14063 / MR-1) protein is Cell division protein ZipA.